The following is a 400-amino-acid chain: Elongation factor Tu 2 (400 aa).

The region spanning 10–209 (KPHLNIGTIG…AVDSYIPLPQ (200 aa)) is the tr-type G domain. The G1 stretch occupies residues 19–26 (GHIDHGKT). 19 to 26 (GHIDHGKT) serves as a coordination point for GTP. Mg(2+) is bound at residue threonine 26. Positions 60–64 (GITIN) are G2. The segment at 81–84 (DCPG) is G3. Residues 81-85 (DCPGH) and 136-139 (NKID) contribute to the GTP site. The interval 136 to 139 (NKID) is G4. The interval 174–176 (SAL) is G5.

This sequence belongs to the TRAFAC class translation factor GTPase superfamily. Classic translation factor GTPase family. EF-Tu/EF-1A subfamily. In terms of assembly, monomer.

It is found in the cytoplasm. It catalyses the reaction GTP + H2O = GDP + phosphate + H(+). GTP hydrolase that promotes the GTP-dependent binding of aminoacyl-tRNA to the A-site of ribosomes during protein biosynthesis. The chain is Elongation factor Tu 2 from Syntrophomonas wolfei subsp. wolfei (strain DSM 2245B / Goettingen).